We begin with the raw amino-acid sequence, 186 residues long: MSQVEISELAKEIRASLKQFPNFPSEGILFEDFLPVFTKPDLFQKLVRAFQLHVGEQKVDYVVGLESRGFLFGPTLALALGAGFVPVRKAGKLPGPVFTAEFQKEYGSDKFQIQKDVIEEGAKVLIVDDILATGGSASSAGELVKQTGGDIVEYLFVMELDFLNGRDKLDKPAFTLLSGQAEKLQN.

132–136 is a binding site for AMP; that stretch reads ATGGS.

This sequence belongs to the purine/pyrimidine phosphoribosyltransferase family. Homodimer. It depends on Mg(2+) as a cofactor.

The protein resides in the cytoplasm. It localises to the nucleus. It carries out the reaction AMP + diphosphate = 5-phospho-alpha-D-ribose 1-diphosphate + adenine. It participates in purine metabolism; AMP biosynthesis via salvage pathway; AMP from adenine: step 1/1. Functionally, catalyzes a salvage reaction resulting in the formation of AMP, that is energically less costly than de novo synthesis. The polypeptide is Adenine phosphoribosyltransferase (APT1) (Debaryomyces hansenii (strain ATCC 36239 / CBS 767 / BCRC 21394 / JCM 1990 / NBRC 0083 / IGC 2968) (Yeast)).